Reading from the N-terminus, the 341-residue chain is Ketol-acid reductoisomerase (NADP(+)) (341 aa).

Residues 2–182 (AKIYYNDDAD…GGTRAGVIET (181 aa)) enclose the KARI N-terminal Rossmann domain. Residues 25 to 28 (YGSQ), Ser-51, Ser-53, and 83 to 86 (DQVQ) each bind NADP(+). Residue His-108 is part of the active site. Residue Gly-134 participates in NADP(+) binding. The KARI C-terminal knotted domain maps to 183-328 (TFTEETESDL…RKLRSLFAWE (146 aa)). The Mg(2+) site is built by Asp-191, Glu-195, Glu-227, and Glu-231. Substrate is bound at residue Ser-252.

It belongs to the ketol-acid reductoisomerase family. Mg(2+) is required as a cofactor.

It catalyses the reaction (2R)-2,3-dihydroxy-3-methylbutanoate + NADP(+) = (2S)-2-acetolactate + NADPH + H(+). It carries out the reaction (2R,3R)-2,3-dihydroxy-3-methylpentanoate + NADP(+) = (S)-2-ethyl-2-hydroxy-3-oxobutanoate + NADPH + H(+). It functions in the pathway amino-acid biosynthesis; L-isoleucine biosynthesis; L-isoleucine from 2-oxobutanoate: step 2/4. The protein operates within amino-acid biosynthesis; L-valine biosynthesis; L-valine from pyruvate: step 2/4. Involved in the biosynthesis of branched-chain amino acids (BCAA). Catalyzes an alkyl-migration followed by a ketol-acid reduction of (S)-2-acetolactate (S2AL) to yield (R)-2,3-dihydroxy-isovalerate. In the isomerase reaction, S2AL is rearranged via a Mg-dependent methyl migration to produce 3-hydroxy-3-methyl-2-ketobutyrate (HMKB). In the reductase reaction, this 2-ketoacid undergoes a metal-dependent reduction by NADPH to yield (R)-2,3-dihydroxy-isovalerate. This Kocuria rhizophila (strain ATCC 9341 / DSM 348 / NBRC 103217 / DC2201) protein is Ketol-acid reductoisomerase (NADP(+)).